The primary structure comprises 1109 residues: Cation channel sperm-associated auxiliary subunit beta (1109 aa).

Residues 1–1055 (MESPLIYVML…QIYVDEVPLP (1055 aa)) are Extracellular-facing. Cysteine 35 and cysteine 60 are disulfide-bonded. Residues asparagine 66, asparagine 90, and asparagine 118 are each glycosylated (N-linked (GlcNAc...) asparagine). The cysteines at positions 189 and 302 are disulfide-linked. Asparagine 321 carries N-linked (GlcNAc...) asparagine glycosylation. A disulfide bridge connects residues cysteine 330 and cysteine 343. Asparagine 672 carries an N-linked (GlcNAc...) asparagine glycan. 4 cysteine pairs are disulfide-bonded: cysteine 720/cysteine 818, cysteine 831/cysteine 1039, cysteine 913/cysteine 922, and cysteine 924/cysteine 939. N-linked (GlcNAc...) asparagine glycans are attached at residues asparagine 915 and asparagine 923. A glycan (N-linked (GlcNAc...) asparagine) is linked at asparagine 1017. The helical transmembrane segment at 1056–1078 (FPGHALIAVATSVVLGVLIFIAF) threads the bilayer. Residues 1079-1109 (VFQLRNIHPLKALKKSIRGNPGLTSSTTVSS) lie on the Cytoplasmic side of the membrane.

Component of the CatSper complex or CatSpermasome composed of the core pore-forming members CATSPER1, CATSPER2, CATSPER3 and CATSPER4 as well as auxiliary members CATSPERB, CATSPERG2, CATSPERD, CATSPERE, CATSPERZ, C2CD6/CATSPERT, SLCO6C1, TMEM249, TMEM262 and EFCAB9. HSPA1 may be an additional auxiliary complex member. The core complex members CATSPER1, CATSPER2, CATSPER3 and CATSPER4 form a heterotetrameric channel. The auxiliary CATSPERB, CATSPERG2, CATSPERD and CATSPERE subunits form a pavilion-like structure over the pore which stabilizes the complex through interactions with CATSPER4, CATSPER3, CATSPER1 and CATSPER2 respectively. SLCO6C1 interacts with CATSPERE and TMEM262/CATSPERH interacts with CATSPERB, further stabilizing the complex. C2CD6/CATSPERT interacts at least with CATSPERD and is required for targeting the CatSper complex in the flagellar membrane. As to expression, testis-specific. Specifically present in the principal piece of sperm tail (at protein level). Specifically expressed in the seminiferous tubules but not in the interstitial cells. Within the tubules, it is expressed in spermatocytes and spermatids, but not in spermatogonia.

It localises to the cell projection. It is found in the cilium. Its subcellular location is the flagellum membrane. Functionally, auxiliary component of the CatSper complex, a complex involved in sperm cell hyperactivation. Sperm cell hyperactivation is needed for sperm motility which is essential late in the preparation of sperm for fertilization. This is Cation channel sperm-associated auxiliary subunit beta from Mus musculus (Mouse).